A 464-amino-acid polypeptide reads, in one-letter code: Agamous-like MADS-box protein AGL92 (464 aa).

The MADS-box domain occupies 1 to 60 (MRTKTKLVLIPDRHFRRATFRKRNAGIRKKLHELTTLCDIKACAVIYSPFENPTVWPSTE). Positions 85 to 114 (ETFLRDQITKEQNKLESLRRENRETQLKHF) form a coiled coil. The disordered stretch occupies residues 443 to 464 (TSTGHMPSTTTTTTNNNNNNNV). Residues 451 to 464 (TTTTTTNNNNNNNV) are compositionally biased toward low complexity.

As to quaternary structure, interacts with AGL62.

The protein resides in the nucleus. Its function is as follows. Putative transcription factor. This chain is Agamous-like MADS-box protein AGL92 (AGL92), found in Arabidopsis thaliana (Mouse-ear cress).